The sequence spans 237 residues: Ribonuclease PH (237 aa).

Phosphate is bound by residues R86 and 124-126 (GTR).

It belongs to the RNase PH family. In terms of assembly, homohexameric ring arranged as a trimer of dimers.

It catalyses the reaction tRNA(n+1) + phosphate = tRNA(n) + a ribonucleoside 5'-diphosphate. Functionally, phosphorolytic 3'-5' exoribonuclease that plays an important role in tRNA 3'-end maturation. Removes nucleotide residues following the 3'-CCA terminus of tRNAs; can also add nucleotides to the ends of RNA molecules by using nucleoside diphosphates as substrates, but this may not be physiologically important. Probably plays a role in initiation of 16S rRNA degradation (leading to ribosome degradation) during starvation. The protein is Ribonuclease PH of Cereibacter sphaeroides (strain ATCC 17029 / ATH 2.4.9) (Rhodobacter sphaeroides).